A 211-amino-acid polypeptide reads, in one-letter code: Endonuclease Htp3 (211 aa).

Positions 1–20 are cleaved as a signal peptide; the sequence is MLEVPVWIPILAFAVGLGLG. Positions 48 to 51 match the RxLR motif; the sequence is RTLR. Positions 48 to 198 constitute a TNase-like domain; the sequence is RTLRGKVVSV…REKRVNIWSL (151 aa). Asp-77 is a binding site for Ca(2+). Arg-90 is a catalytic residue. Asp-95 is a binding site for Ca(2+). Catalysis depends on residues Glu-98 and Arg-138. Asn-153 carries an N-linked (GlcNAc...) asparagine glycan. Residues 200–211 are binding to the host cell surface; that stretch reads KRETPAQYKARK.

The protein in the N-terminal section; belongs to the RxLR effector family. In the C-terminal section; belongs to the LCL3 family. As to quaternary structure, interacts with the host cell surface endoplasmin gp96, in order to get translocated into to host cell. Interacts with the effector Htp1, in order to get released from vesicles into the host cytosol.

Its subcellular location is the secreted. It is found in the host cytoplasm. It localises to the host cytosol. The nuclease activity shows a general salt dependency with a clear reduction by magnesium and sulfate ions. Effector involved in the disease saprolegniosis in salmonids and other freshwater fish, resulting in considerable economic losses in aquaculture. Within the host fish cells, Htp3 is released from vesicles into host cytosol where it degrades nucleic acids. The polypeptide is Endonuclease Htp3 (HTP3) (Saprolegnia parasitica (strain CBS 223.65)).